A 221-amino-acid polypeptide reads, in one-letter code: NEDD4 family-interacting protein 1 (221 aa).

Position 2 is an N-acetylalanine (alanine 2). Residues 2–41 (ALALAALAAVEPACGTGYQQLQNEEEPGEREQTAGDAPPP) are interaction with UBE2L3. Residues 2 to 116 (ALALAALAAV…ADQLRIGNDG (115 aa)) are Cytoplasmic-facing. The interval 15–45 (CGTGYQQLQNEEEPGEREQTAGDAPPPYSSI) is disordered. 3 short sequence motifs (PPxY motif) span residues 39–42 (PPPY), 64–67 (PPSY), and 74–76 (PSY). Residues 42 to 76 (YSSISAESAAYFDYKDESGFPKPPSYNVATTLPSY) form an interaction with ITCH region. A helical membrane pass occupies residues 117 to 137 (IFMLTFFMAFLFNWIGFFLSF). The Extracellular segment spans residues 138-143 (CLTTSA). The helical transmembrane segment at 144–164 (AGRYGAISGFGLSLIKWILIV) threads the bilayer. Residues 165–172 (RFSTYFPG) are Cytoplasmic-facing. The chain crosses the membrane as a helical span at residues 173-193 (YFDGQYWLWWVFLVLGFLLFL). Topologically, residues 194–221 (RGFINYAKVRKMPETFSNLPRTRVLFIY) are extracellular.

Forms heterodimers with NDFIP2. Interacts with several E3 ubiquitin-protein ligases, including ITCH, NEDD4, NEDD4L and WWP2. The interaction with NEDD4, NEDD4L and ITCH leads to relocalization of these proteins to exosomes and eventually to exosomal secretion. Interacts with SR1402. Interacts with SLC11A2/DMT1. Interacts with PTEN. May interact with phosphorylated EGFR. Interacts with BRAT1. Interacts with KCNH2. Interacts with MAVS. Part of a complex containing ITCH, NDFIP1 and MAP3K7. Interacts (via N-terminus) with UBE2L3; the interaction mediates recruitment of UBE2L3 to ITCH. Ubiquitinated by NEDD4; mono-, di- and polyubiquitinated forms are detected. Ubiquitination regulates its degradation. Post-translationally, undergoes transient tyrosine phosphorylation following EGF stimulation, most probably by catalyzed by SRC. Phosphorylation SRC is enhanced in the presence of NDFIP2 which may act as a scaffold to recruit SRC to NDFIP1.

The protein localises to the endosome membrane. Its subcellular location is the golgi apparatus membrane. It localises to the synapse. The protein resides in the synaptosome. It is found in the cell projection. The protein localises to the dendrite. Its subcellular location is the secreted. Activates HECT domain-containing E3 ubiquitin-protein ligases, including NEDD4 and ITCH, and consequently modulates the stability of their targets. As a result, controls many cellular processes. Prevents chronic T-helper cell-mediated inflammation by activating ITCH and thus controlling JUNB degradation. Promotes pancreatic beta cell death through degradation of JUNB and inhibition of the unfolded protein response, leading to reduction of insulin secretion. Restricts the production of pro-inflammatory cytokines in effector Th17 T-cells by promoting ITCH-mediated ubiquitination degradation of RORC. Together with NDFIP2, limits the cytokine signaling and expansion of effector Th2 T-cells by promoting degradation of JAK1, probably by ITCH- and NEDD4L-mediated ubiquitination. Regulates peripheral T-cell tolerance to self and foreign antigens, forcing the exit of naive CD4+ T-cells from the cell cycle before they become effector T-cells. Negatively regulates RLR-mediated antiviral response by promoting SMURF1-mediated ubiquitination and subsequent degradation of MAVS. Negatively regulates KCNH2 potassium channel activity by decreasing its cell-surface expression and interfering with channel maturation through recruitment of NEDD4L to the Golgi apparatus where it mediates KCNH2 degradation. In cortical neurons, mediates the ubiquitination of the divalent metal transporter SLC11A2/DMT1 by NEDD4L, leading to its down-regulation and protection of the cells from cobalt and iron toxicity. Important for normal development of dendrites and dendritic spines in cortex. Enhances the ubiquitination of BRAT1 mediated by: NEDD4, NEDD4L and ITCH and is required for the nuclear localization of ubiquitinated BRAT1. Enhances the ITCH-mediated ubiquitination of MAP3K7 by recruiting E2 ubiquitin-conjugating enzyme UBE2L3 to ITCH. Modulates EGFR signaling through multiple pathways. In particular, may regulate the ratio of AKT1-to-MAPK8 signaling in response to EGF, acting on AKT1 probably through PTEN destabilization and on MAPK8 through ITCH-dependent MAP2K4 inactivation. As a result, may control cell growth rate. Inhibits cell proliferation by promoting PTEN nuclear localization and changing its signaling specificity. This Rattus norvegicus (Rat) protein is NEDD4 family-interacting protein 1 (Ndfip1).